The following is a 798-amino-acid chain: ATP-dependent RNA helicase bel (798 aa).

The tract at residues 16-248 (VAGLDLNGGS…SRWKEGGGSN (233 aa)) is disordered. Positions 31-42 (PITSKTSTNSVT) are enriched in polar residues. 3 stretches are compositionally biased toward gly residues: residues 94–110 (RGGG…GGRG), 118–132 (YGYG…GGGG), and 154–178 (SGGG…GGSG). Phosphoserine occurs at positions 177 and 179. The span at 198–209 (RNDRWQEPERPA) shows a compositional bias: basic and acidic residues. 2 positions are modified to phosphoserine: Ser214 and Ser219. The Q motif signature appears at 295–323 (TSFDDVQLTEIIRNNVALARYDKPTPVQK). ATP-binding positions include 315-322 (YDKPTPVQ) and 339-346 (AQTGSGKT). One can recognise a Helicase ATP-binding domain in the interval 326 to 515 (IPIIINGRDL…SDFLSNYIFL (190 aa)). The short motif at 459-462 (DEAD) is the DEAD box element. In terms of domain architecture, Helicase C-terminal spans 542 to 693 (YLLDLLSSIR…EIPSFMEDMS (152 aa)). Ser638 carries the post-translational modification Phosphoserine. Disordered stretches follow at residues 689-765 (MEDM…SGGG) and 778-798 (GGSY…WWAQ). 2 stretches are compositionally biased toward gly residues: residues 706-717 (RGGGGRYGGGFG) and 740-750 (GGSGSGGGGGS).

Belongs to the DEAD box helicase family. DDX3/DED1 subfamily. As to expression, vas and bel colocalize in nuage (perinuclear, electron-dense granules in germline cells) and at the oocyte posterior during oogenesis.

The protein localises to the cytoplasm. The enzyme catalyses ATP + H2O = ADP + phosphate + H(+). ATP-dependent RNA helicase that is essential and required for cellular function, larval growth, and for male and female fertility. Also required for RNA interference (RNAi), double-stranded RNA induces potent and specific gene silencing, by acting downstream of dsRNA internalization. RNAi is mediated by the RNA-induced silencing complex (RISC), a sequence-specific, multicomponent nuclease that destroys or silences messenger RNAs homologous to the silencing trigger. This Drosophila melanogaster (Fruit fly) protein is ATP-dependent RNA helicase bel.